Consider the following 207-residue polypeptide: Dephospho-CoA kinase (207 aa).

The 198-residue stretch at 10-207 (TLGLTGGIGS…FYLTLRGGQS (198 aa)) folds into the DPCK domain. 18–23 (GSGKSA) lines the ATP pocket.

Belongs to the CoaE family.

It is found in the cytoplasm. The enzyme catalyses 3'-dephospho-CoA + ATP = ADP + CoA + H(+). It functions in the pathway cofactor biosynthesis; coenzyme A biosynthesis; CoA from (R)-pantothenate: step 5/5. In terms of biological role, catalyzes the phosphorylation of the 3'-hydroxyl group of dephosphocoenzyme A to form coenzyme A. The protein is Dephospho-CoA kinase of Pseudomonas fluorescens (strain ATCC BAA-477 / NRRL B-23932 / Pf-5).